The chain runs to 256 residues: Hemin import ATP-binding protein HmuV (256 aa).

Residues 2-238 (ISAQNLVYSL…QALTMLYGAD (237 aa)) enclose the ABC transporter domain. Residue 34–41 (GPNGAGKS) participates in ATP binding.

This sequence belongs to the ABC transporter superfamily. Heme (hemin) importer (TC 3.A.1.14.5) family. The complex is composed of two ATP-binding proteins (HmuV), two transmembrane proteins (HmuU) and a solute-binding protein (HmuT).

The protein localises to the cell inner membrane. In terms of biological role, part of the ABC transporter complex HmuTUV involved in hemin import. Responsible for energy coupling to the transport system. The chain is Hemin import ATP-binding protein HmuV from Escherichia coli O157:H7.